The following is a 136-amino-acid chain: Small cardioactive peptides (136 aa).

An N-terminal signal peptide occupies residues methionine 1–alanine 24. Methionine amide is present on residues methionine 33 and methionine 44. Positions serine 47–lysine 136 are cleaved as a propeptide — carboxy-terminal peptide.

It belongs to the SCP family.

It is found in the secreted. Functionally, the cardioactive peptides enhance the contractions of the auricle in vitro. The protein is Small cardioactive peptides (SCP) of Lymnaea stagnalis (Great pond snail).